The following is a 641-amino-acid chain: MPILEKTPPKMAAKSPSSEEEPGLPKLPVPPLQQTLATYLRCMQHLVPEEQFRRSQAIVQQFGAPGGLGETLQQKLLERQEQTANWVSEYWLNDMYLNNRLALPVNSSPAVIFARQHFQDTNDQLRFAANLISGVLSYKALLDSHSIPIDCAKGQLSGQPLCMKQYYGLFSSYRLPGHTQDTLVAQKSSVMPEPEHVIVACCNQFFVLDVVINFRRLSEGDLFTQLRKIVRMASNEDERLPPIGLLTSDGRSEWAEARTVLVKDSTNRDSLDMIERCICLVCLDAPGGMELSDTNRALQLLHGGGCSKNGANRWYDKSLQFVVGRDGTCGVVCEHSPFDGIVLVQCTEHLLKHMVKSSKKMVRADSVSELPAPRRLRWKCSPEIQGLLASSAEKLQQIVKNLDFTVYKFDDYGKTFIKQQKCSPDAFIQVALQLAFYRLHGRLVPTYESASIRRFHEGRVDNIRSATPEALHFVKAITDHASAMPDSEKLLLLKDAIRAQTQYTVMAITGMAIDNHLLGLRELAREVCKELPEMFTDETYLMSNRFVLSTSQVPTTMEMFCCYGPVVPNGYGACYNPQPESILFCISSFHGCKETSSTKFAKAVEESFIEMKGLCSLSQSGMGKPLATKEKVTRPSQVHQP.

A disordered region spans residues 1–29 (MPILEKTPPKMAAKSPSSEEEPGLPKLPV). Ser-17 is modified (phosphoserine). His-335 functions as the Proton acceptor in the catalytic mechanism. Ser-366 is modified (phosphoserine). CoA contacts are provided by residues 413-425 (GKTF…CSPD), Ser-451, and Gln-552. Residues 619–641 (QSGMGKPLATKEKVTRPSQVHQP) form a disordered region.

This sequence belongs to the carnitine/choline acetyltransferase family.

It carries out the reaction choline + acetyl-CoA = acetylcholine + CoA. Its function is as follows. Catalyzes the reversible synthesis of acetylcholine (ACh) from acetyl CoA and choline at cholinergic synapses. This Sus scrofa (Pig) protein is Choline O-acetyltransferase (CHAT).